The primary structure comprises 548 residues: Tryprostatin B 6-hydroxylase (548 aa).

The next 3 helical transmembrane spans lie at 5–25 (MKCG…LWYF), 35–54 (WRYV…LLYA), and 73–93 (LLMV…RTLF). C491 is a binding site for heme.

It belongs to the cytochrome P450 family. The cofactor is heme.

It localises to the membrane. It carries out the reaction tryprostatin B + reduced [NADPH--hemoprotein reductase] + O2 = 6-hydroxytryprostatin B + oxidized [NADPH--hemoprotein reductase] + H2O + H(+). The protein operates within mycotoxin biosynthesis. In terms of biological role, cytochrome P450 monooxygenase; part of the gene cluster that mediates the biosynthesis of fumitremorgins, indole alkaloids that carry not only intriguing chemical structures, but also interesting biological and pharmacological activities. The biosynthesis of fumitremorgin-type alkaloids begins by condensation of the two amino acids L-tryptophan and L-proline to brevianamide F, catalyzed by the non-ribosomal peptide synthetase ftmPS/ftmA. Brevianamide F is then prenylated by the prenyltransferase ftmPT1/ftmB in the presence of dimethylallyl diphosphate, resulting in the formation of tryprostatin B. The three cytochrome P450 monooxygenases, ftmP450-1/ftmC, ftmP450-2/ftmE and ftmP450-3/FtmG, are responsible for the conversion of tryprostatin B to 6-hydroxytryprostatin B, tryprostatin A to fumitremorgin C and fumitremorgin C to 12,13-dihydroxyfumitremorgin C, respectively. The putative methyltransferase ftmMT/ftmD is expected for the conversion of 6-hydroxytryprostatin B to tryprostatin A. FtmPT2/FtmH catalyzes the prenylation of 12,13-dihydroxyfumitre-morgin C in the presence of dimethylallyl diphosphate, resulting in the formation of fumitremorgin B. Fumitremorgin B is further converted to verruculogen by ftmOx1/ftmF via the insertion of an endoperoxide bond between the two prenyl moieties. Finally, verruculogen is further converted to fumitremorgin A by the verruculogen prenyltransferase ftmPT3. The sequence is that of Tryprostatin B 6-hydroxylase from Neosartorya fischeri (strain ATCC 1020 / DSM 3700 / CBS 544.65 / FGSC A1164 / JCM 1740 / NRRL 181 / WB 181) (Aspergillus fischerianus).